The primary structure comprises 248 residues: NADP-dependent 3-hydroxy acid dehydrogenase YdfG (248 aa).

NADP(+) is bound by residues 7-12, 32-33, 54-55, and Asn-81; these read GATAGF, RR, and DV. Ser-134 is a substrate binding site. NADP(+) contacts are provided by residues Tyr-147, Lys-151, and 177-185; that span reads PGLVGGTEF. Tyr-147 acts as the Proton acceptor in catalysis.

This sequence belongs to the short-chain dehydrogenases/reductases (SDR) family. Homotetramer.

The enzyme catalyses 3-hydroxypropanoate + NADP(+) = 3-oxopropanoate + NADPH + H(+). It catalyses the reaction L-allo-threonine + NADP(+) = aminoacetone + CO2 + NADPH. In terms of biological role, NADP-dependent dehydrogenase with broad substrate specificity acting on 3-hydroxy acids. Catalyzes the NADP-dependent oxidation of L-allo-threonine to L-2-amino-3-keto-butyrate, which is spontaneously decarboxylated into aminoacetone. Also acts on D-threonine, L-serine, D-serine, D-3-hydroxyisobutyrate, L-3-hydroxyisobutyrate, D-glycerate and L-glycerate. Able to catalyze the reduction of the malonic semialdehyde to 3-hydroxypropionic acid. YdfG is apparently supplementing RutE, the presumed malonic semialdehyde reductase involved in pyrimidine degradation since both are able to detoxify malonic semialdehyde. This Salmonella typhi protein is NADP-dependent 3-hydroxy acid dehydrogenase YdfG.